Reading from the N-terminus, the 389-residue chain is Krueppel-like factor 17 (389 aa).

Disordered stretches follow at residues 1-48 (MYGR…SGVH) and 239-279 (LVSQ…GSSE). The span at 26–38 (AQDNENSAPILNM) shows a compositional bias: polar residues. The span at 264–278 (KNSRPQEGTGRRGSS) shows a compositional bias: basic and acidic residues. C2H2-type zinc fingers lie at residues 283 to 307 (YCCNYENCGKAYTKRSHLVSHQRKH), 313 to 337 (YSCNWESCSWSFFRSDELRRHMRVH), and 343 to 365 (YKCDQCSREFMRSDHLKQHQKTH). The tract at residues 356-389 (DHLKQHQKTHRPGPSDPQANNNNGEQDSPPAAGP) is disordered. Over residues 372-381 (PQANNNNGEQ) the composition is skewed to polar residues.

This sequence belongs to the Sp1 C2H2-type zinc-finger protein family.

The protein resides in the nucleus. Its function is as follows. Transcription repressor that binds to the promoter of target genes and prevents their expression. Acts as a negative regulator of epithelial-mesenchymal transition and metastasis in breast cancer. Specifically binds the 5'-CACCC-3' sequence in the promoter of ID1, a key metastasis regulator in breast cancer, and repress its expression. May be a germ cell-specific transcription factor that plays important roles in spermatid differentiation and oocyte development. The protein is Krueppel-like factor 17 (KLF17) of Homo sapiens (Human).